A 224-amino-acid polypeptide reads, in one-letter code: MNSQFKLIGFDLDGTLVNSLPDLALSVNSALAEFELPQAPEELVLTWIGNGADILIGRALDWAKEQSGKSLTDEQTAQLKERFSFYYAENLCNVSRLYPNVKETLETLKEQGFILAVVTNKPTRHVQPVLKAFAIDHLFSETLGGQSLPAIKPHPAPLYYLCGKFGLYPHQILFVGDSRNDILAAHSAGCTAVGLTYGYNYNMPIADSHPDWIFEDFADLLKIV.

Catalysis depends on D11, which acts as the Nucleophile. Mg(2+) is bound by residues D11, D13, and D177.

The protein belongs to the HAD-like hydrolase superfamily. CbbY/CbbZ/Gph/YieH family. The cofactor is Mg(2+).

It catalyses the reaction 2-phosphoglycolate + H2O = glycolate + phosphate. It participates in organic acid metabolism; glycolate biosynthesis; glycolate from 2-phosphoglycolate: step 1/1. In terms of biological role, specifically catalyzes the dephosphorylation of 2-phosphoglycolate. Is involved in the dissimilation of the intracellular 2-phosphoglycolate formed during the DNA repair of 3'-phosphoglycolate ends, a major class of DNA lesions induced by oxidative stress. The protein is Phosphoglycolate phosphatase of Mannheimia succiniciproducens (strain KCTC 0769BP / MBEL55E).